Reading from the N-terminus, the 451-residue chain is Uronate isomerase (451 aa).

The protein belongs to the metallo-dependent hydrolases superfamily. Uronate isomerase family.

It carries out the reaction D-glucuronate = D-fructuronate. The enzyme catalyses aldehydo-D-galacturonate = keto-D-tagaturonate. It functions in the pathway carbohydrate metabolism; pentose and glucuronate interconversion. The sequence is that of Uronate isomerase from Thermotoga petrophila (strain ATCC BAA-488 / DSM 13995 / JCM 10881 / RKU-1).